The sequence spans 427 residues: N-myc proto-oncogene protein (427 aa).

Disordered regions lie at residues 45-79 (FELLPTPPLSPSRPAPGAPSGRGPGAVGRSGSVGL), 144-173 (EKLQNKTPAAPPPPPGTAGSPPVPARSGRA), 195-255 (AAEG…STNK), and 297-349 (APSP…RNHN). Composition is skewed to pro residues over residues 49–61 (PTPPLSPSRPAPG) and 152–167 (AAPPPPPGTAGSPPVP). Residues 210–221 (RASSSSSSSGDD) are compositionally biased toward low complexity. A compositionally biased stretch (acidic residues) spans 222–242 (TLSDSEDDEDEEEEDEEEEID). Residues Ser-224 and Ser-226 each carry the phosphoserine; by CK2 modification. The bHLH domain maps to 343 to 396 (ERRRNHNILERQRANDLRSSFLTLRDHVLSELVQNEKAAKVVILKKATEYVHSL). Residues 396-417 (LQAEEQKLLLEKEKLQARQEQL) are leucine-zipper.

As to quaternary structure, efficient DNA binding requires dimerization with another bHLH protein. Binds DNA as a heterodimer with MAX.

Its subcellular location is the nucleus. The protein is N-myc proto-oncogene protein (MYCN) of Serinus canaria (Island canary).